The chain runs to 255 residues: Large ribosomal subunit protein uL6m (255 aa).

The segment at 39–61 is disordered; the sequence is AARRNFSATTTRPSKLGRTPLSI.

It belongs to the universal ribosomal protein uL6 family. Component of the mitochondrial large ribosomal subunit (mt-LSU). Mature N.crassa 74S mitochondrial ribosomes consist of a small (37S) and a large (54S) subunit. The 37S small subunit contains a 16S ribosomal RNA (16S mt-rRNA) and 32 different proteins. The 54S large subunit contains a 23S rRNA (23S mt-rRNA) and 42 different proteins.

Its subcellular location is the mitochondrion. Functionally, component of the mitochondrial ribosome (mitoribosome), a dedicated translation machinery responsible for the synthesis of mitochondrial genome-encoded proteins, including at least some of the essential transmembrane subunits of the mitochondrial respiratory chain. The mitoribosomes are attached to the mitochondrial inner membrane and translation products are cotranslationally integrated into the membrane. This chain is Large ribosomal subunit protein uL6m (mrpl6), found in Neurospora crassa (strain ATCC 24698 / 74-OR23-1A / CBS 708.71 / DSM 1257 / FGSC 987).